The primary structure comprises 949 residues: Piwi-like protein 2 (949 aa).

Residues 1 to 125 (MDPTRPPFRG…SLSTRVQQAS (125 aa)) are disordered. Residues 115–125 (PSLSTRVQQAS) are compositionally biased toward polar residues. One can recognise a PAZ domain in the interval 366–478 (SVLDIMNILY…LLPELAFMTG (113 aa)). A Piwi domain is found at 644–935 (LLVCLISGTR…LAFLSGQFLH (292 aa)). Residues Asp721, Glu759, Asp791, and His924 contribute to the active site.

Belongs to the argonaute family. Piwi subfamily. As to quaternary structure, component of the PET complex. The cofactor is Mg(2+). Methylated on arginine residues; required for the interaction with Tudor domain-containing protein and subsequent localization to the meiotic nuage, also named P granule. As to expression, expressed in oocytes, testis and liver (at protein level).

It is found in the cytoplasm. The protein localises to the nucleus. Its function is as follows. Endoribonuclease that plays a central role during spermatogenesis by repressing transposable elements and preventing their mobilization, which is essential for the germline integrity. Plays an essential role in meiotic differentiation of spermatocytes, germ cell differentiation and in self-renewal of spermatogonial stem cells. Acts via the piRNA metabolic process, which mediates the repression of transposable elements during meiosis by forming complexes composed of piRNAs and Piwi proteins and govern the methylation and subsequent repression of transposons. During piRNA biosynthesis, plays a key role in the piRNA amplification loop, also named ping-pong amplification cycle, by acting as a 'slicer-competent' piRNA endoribonuclease that cleaves primary piRNAs, which are then loaded onto 'slicer-incompetent' piwil4. Piwil2 slicing produces a pre-miRNA intermediate, which is then processed in mature piRNAs, and as well as a 16 nucleotide by-product that is degraded. Required for piwil4/miwi2 nuclear localization and association with secondary piRNAs antisense. Represses circadian rhythms by promoting the stability and activity of core clock components BMAL1 and CLOCK. This Xenopus tropicalis (Western clawed frog) protein is Piwi-like protein 2 (piwil2).